The following is an 86-amino-acid chain: Synergistic-like venom protein (86 aa).

The first 21 residues, 1-21, serve as a signal peptide directing secretion; it reads MKTLLLTLVVVTIVCLDLGYT. 4 cysteine pairs are disulfide-bonded: C24-C45, C38-C63, C67-C78, and C79-C84.

The protein belongs to the three-finger toxin family. Short-chain subfamily. Aminergic toxin sub-subfamily. Expressed by the venom gland.

It is found in the secreted. In Dendroaspis angusticeps (Eastern green mamba), this protein is Synergistic-like venom protein.